A 320-amino-acid chain; its full sequence is Putative S-adenosyl-L-methionine-dependent methyltransferase MAP_4078 (320 aa).

S-adenosyl-L-methionine-binding positions include Asp132 and Asp161 to Leu162. The interval Pro294 to Arg320 is disordered.

This sequence belongs to the UPF0677 family.

Its function is as follows. Exhibits S-adenosyl-L-methionine-dependent methyltransferase activity. The polypeptide is Putative S-adenosyl-L-methionine-dependent methyltransferase MAP_4078 (Mycolicibacterium paratuberculosis (strain ATCC BAA-968 / K-10) (Mycobacterium paratuberculosis)).